A 198-amino-acid polypeptide reads, in one-letter code: Molybdopterin synthase catalytic subunit (198 aa).

Low complexity predominate over residues 1-27 (MASQPPQEPTPTATSTPSTSALASLPP). A disordered region spans residues 1-40 (MASQPPQEPTPTATSTPSTSALASLPPHLDPTTYPRTLTS). Residues 143-144 (HR), lysine 159, and 166-168 (KRE) each bind substrate. Residues 176-198 (EWRENRERDAEGKVVAEKQEERE) are disordered.

It belongs to the MoaE family. MOCS2B subfamily. In terms of assembly, heterotetramer; composed of 2 small (MOCS2A) and 2 large (MOCS2B) subunits.

The protein localises to the cytoplasm. The catalysed reaction is 2 [molybdopterin-synthase sulfur-carrier protein]-C-terminal-Gly-aminoethanethioate + cyclic pyranopterin phosphate + H2O = molybdopterin + 2 [molybdopterin-synthase sulfur-carrier protein]-C-terminal Gly-Gly + 2 H(+). It participates in cofactor biosynthesis; molybdopterin biosynthesis. Catalytic subunit of the molybdopterin synthase complex, a complex that catalyzes the conversion of precursor Z into molybdopterin. Acts by mediating the incorporation of 2 sulfur atoms from thiocarboxylated MOCS2A into precursor Z to generate a dithiolene group. This Aspergillus clavatus (strain ATCC 1007 / CBS 513.65 / DSM 816 / NCTC 3887 / NRRL 1 / QM 1276 / 107) protein is Molybdopterin synthase catalytic subunit.